A 389-amino-acid polypeptide reads, in one-letter code: MANGANRVDLDGKPIQPLTICMIGAGGFIGSHLCEKLLTETPHKVLALDVYNDKIKHLLEPDTVEWSGRIQFHRINIKHDSRLEGLVKMADLIINLAAICTPADYNTRPLDTIYSNFIDALPVVKYCSENNKRLIHFSTCEVYGKTIGSFLPKDHPLRDDPAFYVLKEDISPCIFGSIEKQRWSYACAKQLIERLVYAEGAENGLEFTIVRPFNWIGPRMDFIPGIDGPSEGVPRVLACFSNNLLRREPLKLVDGGESQRTFVYINDAIEAVLLMIENPERANGHIFNVGNPNNEVTVRQLAEMMTEVYAKVSGEGAIESPTVDVSSKEFYGEGYDDSDKRIPDMTIINRQLGWNPKTSLWDLLESTLTYQHRTYAEAVKKATSKPVAS.

6 residues coordinate NAD(+): phenylalanine 28, isoleucine 29, aspartate 49, asparagine 76, isoleucine 77, and leucine 96. UDP-alpha-D-glucuronate-binding residues include tyrosine 105, threonine 139, glutamate 141, arginine 182, and tyrosine 185. 2 residues coordinate NAD(+): tyrosine 185 and lysine 189. Residue tyrosine 185 is the Proton acceptor of the active site. Asparagine 214 contacts UDP-alpha-D-glucuronate. NAD(+)-binding residues include tryptophan 215 and arginine 235. UDP-alpha-D-glucuronate-binding residues include lysine 251, valine 253, arginine 260, tyrosine 331, tyrosine 335, aspartate 337, and arginine 341.

Belongs to the NAD(P)-dependent epimerase/dehydratase family. Homodimer and heterodimer with AXS2. It depends on NAD(+) as a cofactor. In terms of tissue distribution, widely expressed with stronger expression in leaves and stems, and lower levels in flowers, siliques, pistils, pollen and roots.

It localises to the cytoplasm. The enzyme catalyses UDP-alpha-D-glucuronate + H(+) = UDP-alpha-D-xylose + CO2. The catalysed reaction is UDP-alpha-D-glucuronate + H(+) = UDP-alpha-D-apiose + CO2. Inhibited by UDP-D-galacturonate. Together with AXS2, catalyzes the conversion of UDP-D-glucuronate into a mixture of UDP-D-apiose (UDP-Api) as the main product and UDP-D-xylose to a lesser extent, via a cycle of oxidation and reduction. D-Apiose (3-C-hydroxymethyl-d-erythrose) is the only plant cell wall monosaccharide with a branched carbon skeleton and is found in rhamnogalacturonan II (RG-II), apiogalacturonan, and several apioglycosides. The polypeptide is UDP-D-apiose/UDP-D-xylose synthase 1 (Arabidopsis thaliana (Mouse-ear cress)).